A 503-amino-acid polypeptide reads, in one-letter code: Methylthioalkylmalate synthase 3, chloroplastic (503 aa).

Residues 1–51 (MASLLLTSSSMITTSCRSMVLRSGLPIGSSFPSLRLTRPYDKATLFVSCCS) constitute a chloroplast transit peptide. The 275-residue stretch at 85–359 (VRVLDTTLRD…YTKIDSRQIM (275 aa)) folds into the Pyruvate carboxyltransferase domain.

It belongs to the alpha-IPM synthase/homocitrate synthase family. It depends on Mn(2+) as a cofactor. As to expression, highly expressed in roots, leaves, and siliques. Lower amounts in stems and flowers.

The protein localises to the plastid. It is found in the chloroplast. The enzyme catalyses an omega-(methylsulfanyl)-2-oxoalkanoate + acetyl-CoA + H2O = a 2-(omega-methylsulfanyl)alkylmalate + CoA + H(+). Not activated by ATP. In terms of biological role, determines the side chain length of aliphatic glucosinolate structures. Accepts all the omega-methylthio-2-oxoalkanoic acids needed to form the known C3 to C8 glucosinolates. Also able to convert pyruvate to citramalate, 2-oxoisovalerate to isopropylmalate, 4-methyl-2-oxopentanoate and 5-methyl-2-oxohexanoate for Leu-derived glucosinolates, 3-methyl-2-oxopentanoate for Ile-derived glucosinolates and phenylpyruvate to phenylethylglucosinolate. This Arabidopsis thaliana (Mouse-ear cress) protein is Methylthioalkylmalate synthase 3, chloroplastic (MAM3).